Consider the following 61-residue polypeptide: Neurotoxin-like protein 1 (61 aa).

4 disulfide bridges follow: Cys-3–Cys-24, Cys-17–Cys-38, Cys-42–Cys-53, and Cys-54–Cys-59.

Expressed by the venom gland.

The protein resides in the secreted. In Causus rhombeatus (Rhombic night adder), this protein is Neurotoxin-like protein 1.